Here is a 262-residue protein sequence, read N- to C-terminus: Glucosamine-6-phosphate deaminase (262 aa).

D63 acts as the Proton acceptor; for enolization step in catalysis. Residue N129 is the For ring-opening step of the active site. H131 acts as the Proton acceptor; for ring-opening step in catalysis. E136 functions as the For ring-opening step in the catalytic mechanism.

It belongs to the glucosamine/galactosamine-6-phosphate isomerase family. NagB subfamily.

The catalysed reaction is alpha-D-glucosamine 6-phosphate + H2O = beta-D-fructose 6-phosphate + NH4(+). Its pathway is amino-sugar metabolism; N-acetylneuraminate degradation; D-fructose 6-phosphate from N-acetylneuraminate: step 5/5. Catalyzes the reversible isomerization-deamination of glucosamine 6-phosphate (GlcN6P) to form fructose 6-phosphate (Fru6P) and ammonium ion. The protein is Glucosamine-6-phosphate deaminase of Bacillus cytotoxicus (strain DSM 22905 / CIP 110041 / 391-98 / NVH 391-98).